The primary structure comprises 238 residues: Glutamine amidotransferase-like protein chyE (238 aa).

The Glutamine amidotransferase type-1 domain maps to 8 to 238; sequence KIAVLINTPP…LERVLQWLSE (231 aa). Cysteine 102 (nucleophile) is an active-site residue. Active-site residues include histidine 189 and glutamate 191.

It belongs to the peptidase C26 family.

The protein operates within pigment biosynthesis. Glutamine amidotransferase-like protein; part of the gene cluster that mediates the biosynthesis of the yellow pigment chrysogine. the NRPS chyA mediates the condensation of anthranilic acid and alanine into the intermediate 2-(2-aminopropanamido)benzoic acid. The remainder of the pathway is highly branched yielding at least 13 chrysogine-related compounds. The malonyl transferase chyE converts 2-(2-aminopropanamido)benzoic acid and 2-(2-aminopropanamido)benzamidine into 2-(2-(2-carboxyacetamido)propanamido)benzoic acid and 3-((1-((2-carbamoylphenyl)amino)-1-oxopropan-2-yl)amino)-3-oxopropanoic acid, respectively. ChyD is an amidase, being responsible for the amidation of the carboxylic acid moiety of 2-(2-aminopropanamido)benzoic acid, 2-(2-(2-carboxyacetamido)propanamido)benzoic acid and 2-(2-((4-amino-1-carboxy-4-oxobutyl)amino)propanamido)benzoic acid. ChyC is involved in the same reactions as ChyD, but plays a more minor role in the amidation reactions compared to chyD. The oxidoreductases chyH and chyM are involved in oxidation reactions that form N-pyruvoylanthranilamide from 2-(2-aminopropanamido)benzamidine and (1-((2-carbamoylphenyl)amino)-1-oxopropan-2-yl)glutamine, respectively. N-pyruvoylanthranilamide is further converted via two further branches in the pathway, yielding chrysogine and additional chrysogine-related coumpounds. Chrysogine is likely formed by a spontaneous ring closure from N-pyruvoylanthranilamide. This is Glutamine amidotransferase-like protein chyE from Penicillium rubens (strain ATCC 28089 / DSM 1075 / NRRL 1951 / Wisconsin 54-1255) (Penicillium chrysogenum).